A 741-amino-acid polypeptide reads, in one-letter code: DNA ligase (741 aa).

Residues 78–82 (DADYD), 127–128 (SL), and E161 each bind NAD(+). K163 (N6-AMP-lysine intermediate) is an active-site residue. Residues R184, E219, K335, and K359 each coordinate NAD(+). Residues C464, C467, C482, and C488 each contribute to the Zn(2+) site. In terms of domain architecture, BRCT spans 662–741 (VGDSPVAGKT…DAWRVLAGLA (80 aa)).

The protein belongs to the NAD-dependent DNA ligase family. LigA subfamily. Mg(2+) is required as a cofactor. Requires Mn(2+) as cofactor.

It carries out the reaction NAD(+) + (deoxyribonucleotide)n-3'-hydroxyl + 5'-phospho-(deoxyribonucleotide)m = (deoxyribonucleotide)n+m + AMP + beta-nicotinamide D-nucleotide.. Functionally, DNA ligase that catalyzes the formation of phosphodiester linkages between 5'-phosphoryl and 3'-hydroxyl groups in double-stranded DNA using NAD as a coenzyme and as the energy source for the reaction. It is essential for DNA replication and repair of damaged DNA. This Dinoroseobacter shibae (strain DSM 16493 / NCIMB 14021 / DFL 12) protein is DNA ligase.